Here is a 158-residue protein sequence, read N- to C-terminus: 6,7-dimethyl-8-ribityllumazine synthase (158 aa).

Residues F23, 61-63, and 85-87 each bind 5-amino-6-(D-ribitylamino)uracil; these read SFE and AVI. 90 to 91 is a (2S)-2-hydroxy-3-oxobutyl phosphate binding site; it reads ET. The active-site Proton donor is the H93. F118 is a 5-amino-6-(D-ribitylamino)uracil binding site. R132 is a (2S)-2-hydroxy-3-oxobutyl phosphate binding site.

It belongs to the DMRL synthase family.

It catalyses the reaction (2S)-2-hydroxy-3-oxobutyl phosphate + 5-amino-6-(D-ribitylamino)uracil = 6,7-dimethyl-8-(1-D-ribityl)lumazine + phosphate + 2 H2O + H(+). It participates in cofactor biosynthesis; riboflavin biosynthesis; riboflavin from 2-hydroxy-3-oxobutyl phosphate and 5-amino-6-(D-ribitylamino)uracil: step 1/2. Functionally, catalyzes the formation of 6,7-dimethyl-8-ribityllumazine by condensation of 5-amino-6-(D-ribitylamino)uracil with 3,4-dihydroxy-2-butanone 4-phosphate. This is the penultimate step in the biosynthesis of riboflavin. The polypeptide is 6,7-dimethyl-8-ribityllumazine synthase (Prochlorococcus marinus (strain MIT 9301)).